The primary structure comprises 95 residues: Small ribosomal subunit protein bS16 (95 aa).

This sequence belongs to the bacterial ribosomal protein bS16 family.

This chain is Small ribosomal subunit protein bS16, found in Thermotoga maritima (strain ATCC 43589 / DSM 3109 / JCM 10099 / NBRC 100826 / MSB8).